Reading from the N-terminus, the 95-residue chain is Parvalbumin alpha (95 aa).

Phosphoserine is present on Ser19. EF-hand domains are found at residues 34 to 69 (KNREEVKMVFQILDKDKSGFIEEEELKFILKGFSAD) and 73 to 95 (LSDTETKRMMAAGDKDGDGKIGA). Residues Asp47, Asp49, Ser51, Phe53, Glu55, Glu58, Asp86, Asp88, Asp90, and Lys92 each contribute to the Ca(2+) site.

Belongs to the parvalbumin family.

In terms of biological role, in muscle, parvalbumin is thought to be involved in relaxation after contraction. It binds two calcium ions. This is Parvalbumin alpha (PVALB) from Cavia porcellus (Guinea pig).